The following is a 507-amino-acid chain: Glycerol kinase (507 aa).

Thr15 is an ADP binding site. ATP-binding residues include Thr15, Thr16, and Ser17. Thr15 contributes to the sn-glycerol 3-phosphate binding site. Arg19 serves as a coordination point for ADP. Arg85, Glu86, Tyr137, and Asp250 together coordinate sn-glycerol 3-phosphate. Glycerol contacts are provided by Arg85, Glu86, Tyr137, Asp250, and Gln251. ADP-binding residues include Thr272 and Gly316. ATP contacts are provided by Thr272, Gly316, Gln320, and Gly417. Position 417 (Gly417) interacts with ADP.

This sequence belongs to the FGGY kinase family.

The catalysed reaction is glycerol + ATP = sn-glycerol 3-phosphate + ADP + H(+). It functions in the pathway polyol metabolism; glycerol degradation via glycerol kinase pathway; sn-glycerol 3-phosphate from glycerol: step 1/1. Inhibited by fructose 1,6-bisphosphate (FBP). In terms of biological role, key enzyme in the regulation of glycerol uptake and metabolism. Catalyzes the phosphorylation of glycerol to yield sn-glycerol 3-phosphate. The sequence is that of Glycerol kinase from Mycoplasmopsis pulmonis (strain UAB CTIP) (Mycoplasma pulmonis).